The following is a 103-amino-acid chain: Cobalt transport protein CbiN (103 aa).

The next 2 helical transmembrane spans lie at valine 6–valine 26 and leucine 68–leucine 88.

The protein belongs to the CbiN family. As to quaternary structure, forms an energy-coupling factor (ECF) transporter complex composed of an ATP-binding protein (A component, CbiO), a transmembrane protein (T component, CbiQ) and 2 possible substrate-capture proteins (S components, CbiM and CbiN) of unknown stoichimetry.

Its subcellular location is the cell membrane. Its pathway is cofactor biosynthesis; adenosylcobalamin biosynthesis. Part of the energy-coupling factor (ECF) transporter complex CbiMNOQ involved in cobalt import. The polypeptide is Cobalt transport protein CbiN (Clostridium perfringens (strain 13 / Type A)).